Reading from the N-terminus, the 1039-residue chain is Integrin alpha-IIb (1039 aa).

The first 31 residues, Met-1–Ala-31, serve as a signal peptide directing secretion. Over Leu-32–Arg-993 the chain is Extracellular. 7 FG-GAP repeats span residues Asp-35 to Cys-96, Val-110 to Glu-173, Val-187 to Tyr-238, Ser-251 to Tyr-305, Gln-306 to Leu-371, Ala-373 to Ser-432, and Ser-435 to Ser-496. A glycan (N-linked (GlcNAc...) asparagine) is linked at Asn-46. 3 cysteine pairs are disulfide-bonded: Cys-87-Cys-96, Cys-138-Cys-161, and Cys-177-Cys-198. Ca(2+) contacts are provided by Glu-274, Asp-276, and Asp-278. An N-linked (GlcNAc...) asparagine glycan is attached at Asn-280. Ca(2+)-binding residues include Thr-281, Glu-283, Asp-328, Asn-330, Asp-332, Arg-334, Asp-336, Asp-396, Asp-398, Asp-400, Tyr-402, Asp-404, Asp-457, Asp-459, Asn-461, Tyr-463, and Asp-465. Intrachain disulfides connect Cys-504–Cys-515 and Cys-521–Cys-576. Asn-601 carries an N-linked (GlcNAc...) asparagine glycan. 4 disulfide bridges follow: Cys-633/Cys-639, Cys-705/Cys-718, Cys-857/Cys-921, and Cys-911/Cys-916. The N-linked (GlcNAc...) asparagine glycan is linked to Asn-711. Ile-874 is a glycosylation site (O-linked (GalNAc...) serine; in variant S-874). A glycan (O-linked (GalNAc...) serine) is linked at Ser-878. At Gln-891 the chain carries Pyrrolidone carboxylic acid; in light chain form 1. N-linked (GlcNAc...) asparagine glycosylation is present at Asn-962. Residues Ala-994–Trp-1019 traverse the membrane as a helical segment. Topologically, residues Lys-1020–Glu-1039 are cytoplasmic. A GFFKR motif motif is present at residues Gly-1022–Arg-1026.

This sequence belongs to the integrin alpha chain family. In terms of assembly, heterodimer of an alpha and a beta subunit. The alpha subunit is composed of a heavy and a light chain linked by a disulfide bond. Alpha-IIb associates with beta-3. Directly interacts with RNF181. Interacts (via C-terminus cytoplasmic tail region) with CIB1; the interaction is direct and calcium-dependent. Interacts (via C-terminus cytoplasmic tail region) with CIB2, CIB3 and CIB4; the interactions are stabilized/increased in a calcium and magnesium-dependent manner. ITGA2B:ITGB3 interacts with PPIA/CYPA; the interaction is ROS and PPIase activity-dependent and is increased in the presence of thrombin. ITGA2B:ITGB3 interacts with SELP (via C-type lectin domain); the interaction mediates cell-cell interaction and adhesion. Cleaved by ELANE; the cleavage promotes activation of platelet fibrinogen receptor integrin alpha-IIb/beta-3. In terms of tissue distribution, isoform 1 and isoform 2 are expressed in platelets and megakaryocytes, but not in reticulocytes. Not detected in Jurkat, nor in U937 cell lines. Isoform 3 is expressed in prostate adenocarcinoma, as well as in several erythroleukemia, prostate adenocarcinoma and melanoma cell lines, including PC-3, DU-145, HEL, WM983A, WM983B and WM35. Not detected in platelets, nor in normal prostate (at protein level).

The protein resides in the membrane. Integrin alpha-IIb/beta-3 is a receptor for fibronectin, fibrinogen, plasminogen, prothrombin, thrombospondin and vitronectin. It recognizes the sequence R-G-D in a wide array of ligands. It recognizes the sequence H-H-L-G-G-G-A-K-Q-A-G-D-V in fibrinogen gamma chain. Following activation integrin alpha-IIb/beta-3 brings about platelet/platelet interaction through binding of soluble fibrinogen. This step leads to rapid platelet aggregation which physically plugs ruptured endothelial cell surface. The chain is Integrin alpha-IIb (ITGA2B) from Homo sapiens (Human).